The following is a 443-amino-acid chain: Xaa-Pro dipeptidase (443 aa).

5 residues coordinate Mn(2+): aspartate 246, aspartate 257, histidine 339, glutamate 384, and glutamate 423.

This sequence belongs to the peptidase M24B family. Bacterial-type prolidase subfamily. Requires Mn(2+) as cofactor.

The catalysed reaction is Xaa-L-Pro dipeptide + H2O = an L-alpha-amino acid + L-proline. In terms of biological role, splits dipeptides with a prolyl residue in the C-terminal position. The sequence is that of Xaa-Pro dipeptidase from Yersinia pseudotuberculosis serotype I (strain IP32953).